The following is a 982-amino-acid chain: Glutamate [NMDA] receptor subunit 1 (982 aa).

Positions 1–22 (MRVAFIYRWLLCGAAIVNVLVA) are cleaved as a signal peptide. The Extracellular portion of the chain corresponds to 23-568 (QRHTASDNPS…TLVSFLQPFS (546 aa)). Asparagine 253, asparagine 309, asparagine 340, asparagine 392, asparagine 449, asparagine 476, and asparagine 496 each carry an N-linked (GlcNAc...) asparagine glycan. Glycine is bound by residues 525-527 (PLT) and arginine 532. The chain crosses the membrane as a helical span at residues 569–589 (NTLWILVMVSVHVVALVLYLL). Topologically, residues 590–646 (DRFSPFGRFKLSHSDSNEEKALNLSSAVWFAWGVLLNSGIGEGTPRSFSARVLGMVW) are cytoplasmic. The chain crosses the membrane as a helical span at residues 647–667 (AGFAMIIVASYTANLAAFLVL). The Extracellular segment spans residues 668 to 826 (ERPKTKLSGI…KTPNTLGLKN (159 aa)). N-linked (GlcNAc...) asparagine glycosylation is present at asparagine 688. Residues serine 698 and aspartate 742 each contribute to the glycine site. Residues 827 to 847 (MAGVFILVGVGIAGGVGLIII) form a helical membrane-spanning segment. Residues 848–982 (EVIYKKHQVK…YTSDVSHLVV (135 aa)) are Cytoplasmic-facing. Positions 948–982 (LTASQLGLGKTRPQQNPLPPRYSPGYTSDVSHLVV) are disordered. Residues 972–982 (GYTSDVSHLVV) show a composition bias toward polar residues.

This sequence belongs to the glutamate-gated ion channel (TC 1.A.10.1) family. Forms a heteromeric NMDA channel with Nmdar2.

Its subcellular location is the cell membrane. It is found in the postsynaptic cell membrane. The protein resides in the postsynaptic density. Functionally, NMDA receptor subtype of glutamate-gated ion channels with high calcium permeability and voltage-dependent sensitivity to magnesium. Mediated by glycine. This protein plays a key role in synaptic plasticity, synaptogenesis, excitotoxicity, memory acquisition and learning. It mediates neuronal functions in glutamate neurotransmission. Is involved in the cell surface targeting of NMDA receptors. Plays a role in associative learning and in long-term memory consolidation. The sequence is that of Glutamate [NMDA] receptor subunit 1 from Drosophila grimshawi (Hawaiian fruit fly).